The primary structure comprises 82 residues: MSYDKVSQAQSIIIGTKQTVKALKRDSVKEIVVAKDADPALTASVTKLAQEKGVDILVVDSMKKLGKACGIEVGAAAVAIML.

It belongs to the eukaryotic ribosomal protein eL8 family.

The polypeptide is RNA-binding protein BPUM_0095 (Bacillus pumilus (strain SAFR-032)).